Consider the following 277-residue polypeptide: Adaptin ear-binding coat-associated protein 1 (277 aa).

The segment at 164-277 (GNITAKKGGT…APQPSNWVQF (114 aa)) is disordered. Residues 187–201 (LPPPPGGKVTIPPPS) show a composition bias toward pro residues. Position 211 is a phosphothreonine (threonine 211). The segment covering 222 to 234 (SNDSDILLDLDSP) has biased composition (low complexity). A compositionally biased stretch (pro residues) spans 235-245 (APVPTSAPAPA). 2 consecutive short sequence motifs (WXXF motif) follow at residues 254–257 (WGDF) and 274–277 (WVQF). Positions 258-277 (STASSSVPNQAPQPSNWVQF) are enriched in polar residues.

It belongs to the NECAP family. Interacts with AP1G1 and AP2A1 components of the adapter protein complexes AP-1 and AP-2. Interacts with the GAE domain proteins GGA1, GGA2 and GGA3. Interacts with AP2A2. As to expression, expressed predominantly in brain (at protein level).

The protein resides in the cytoplasmic vesicle. It localises to the clathrin-coated vesicle membrane. It is found in the cell membrane. Functionally, involved in endocytosis. The sequence is that of Adaptin ear-binding coat-associated protein 1 (Necap1) from Rattus norvegicus (Rat).